Here is a 292-residue protein sequence, read N- to C-terminus: Protoheme IX farnesyltransferase (292 aa).

Transmembrane regions (helical) follow at residues 15-35, 49-69, 104-124, 147-167, 171-191, 218-238, 242-262, and 271-291; these read YLVLTKPGIVSLVLITTLGGM, FWTLLGTGLAAAGSAVLNMVI, VFSLVIMLTFVGVLPALLVAL, IGGISGALPPVIGYVAASGSV, AIALFLLMFMWQPPHFWVLAL, TLLYTASLFPVSLIPYLTGLV, YFVVAVVMNLIYLGLTLKFFF, and LFFFSIIYLAVLFGTMIVDMV.

Belongs to the UbiA prenyltransferase family. Protoheme IX farnesyltransferase subfamily.

It is found in the cell inner membrane. The catalysed reaction is heme b + (2E,6E)-farnesyl diphosphate + H2O = Fe(II)-heme o + diphosphate. It functions in the pathway porphyrin-containing compound metabolism; heme O biosynthesis; heme O from protoheme: step 1/1. Converts heme B (protoheme IX) to heme O by substitution of the vinyl group on carbon 2 of heme B porphyrin ring with a hydroxyethyl farnesyl side group. The chain is Protoheme IX farnesyltransferase from Aquifex aeolicus (strain VF5).